A 428-amino-acid polypeptide reads, in one-letter code: Serine hydroxymethyltransferase (428 aa).

Residues leucine 117 and 121 to 123 (GHL) each bind (6S)-5,6,7,8-tetrahydrofolate. Lysine 226 is subject to N6-(pyridoxal phosphate)lysine.

Belongs to the SHMT family. In terms of assembly, homodimer. The cofactor is pyridoxal 5'-phosphate.

Its subcellular location is the cytoplasm. The enzyme catalyses (6R)-5,10-methylene-5,6,7,8-tetrahydrofolate + glycine + H2O = (6S)-5,6,7,8-tetrahydrofolate + L-serine. The protein operates within one-carbon metabolism; tetrahydrofolate interconversion. Its pathway is amino-acid biosynthesis; glycine biosynthesis; glycine from L-serine: step 1/1. In terms of biological role, catalyzes the reversible interconversion of serine and glycine with tetrahydrofolate (THF) serving as the one-carbon carrier. This reaction serves as the major source of one-carbon groups required for the biosynthesis of purines, thymidylate, methionine, and other important biomolecules. Also exhibits THF-independent aldolase activity toward beta-hydroxyamino acids, producing glycine and aldehydes, via a retro-aldol mechanism. The protein is Serine hydroxymethyltransferase of Aquifex aeolicus (strain VF5).